The following is a 133-amino-acid chain: Homeobox protein HD-5 (133 aa).

Residues 34-93 constitute a DNA-binding region (homeobox); it reads SKRSRLKLSGQQIDVLESNFKIDSHPNSATKSLLSNALSIPLKNIQIWFQNRRAKEKTAR. Positions 86 to 109 are disordered; it reads RAKEKTARDGGRRRSGNAEIEDGE.

Its subcellular location is the nucleus. This chain is Homeobox protein HD-5 (HD-5), found in Encephalitozoon cuniculi (strain GB-M1) (Microsporidian parasite).